The chain runs to 452 residues: Inner membrane metabolite transport protein YdjE (452 aa).

Over Met-1–His-20 the chain is Cytoplasmic. Residues Tyr-21–Val-43 traverse the membrane as a helical segment. Topologically, residues Val-44–Phe-57 are periplasmic. A helical transmembrane segment spans residues Leu-58–Ile-80. Residues Gly-81–Arg-91 are Cytoplasmic-facing. Residues Ile-92–Ile-114 traverse the membrane as a helical segment. Over Phe-115–Arg-117 the chain is Periplasmic. The chain crosses the membrane as a helical span at residues Phe-118–Pro-140. Over Ala-141–Ser-152 the chain is Cytoplasmic. Residues Phe-153–Trp-175 form a helical membrane-spanning segment. Residues Arg-176 to Met-178 lie on the Periplasmic side of the membrane. The chain crosses the membrane as a helical span at residues Phe-179 to Ile-198. Topologically, residues Glu-199 to Val-265 are cytoplasmic. Residues Ala-266–Phe-288 form a helical membrane-spanning segment. Over Val-289–Lys-297 the chain is Periplasmic. Residues Ser-298 to Ile-320 traverse the membrane as a helical segment. Residues Asp-321–Arg-326 lie on the Cytoplasmic side of the membrane. A helical membrane pass occupies residues Leu-327–Ser-344. Topologically, residues Ile-345–Leu-353 are periplasmic. The helical transmembrane segment at Ile-354–Pro-376 threads the bilayer. Over Glu-377–Ser-388 the chain is Cytoplasmic. A helical membrane pass occupies residues Gly-389 to Thr-411. At His-412 to Ser-415 the chain is on the periplasmic side. Residues Ile-416–Ile-438 traverse the membrane as a helical segment. The Cytoplasmic segment spans residues Glu-439–Asn-452.

This sequence belongs to the major facilitator superfamily. Sugar transporter (TC 2.A.1.1) family.

The protein resides in the cell inner membrane. The protein is Inner membrane metabolite transport protein YdjE (ydjE) of Escherichia coli (strain K12).